The chain runs to 459 residues: N(6)-adenosine-methyltransferase non-catalytic subunit METTL14 (459 aa).

A disordered region spans residues 50 to 73 (TCRASYDTSAPNAKRKYPDEGEAD). Interaction with METTL3 regions lie at residues 135-136 (RD) and 237-238 (SG). The positively charged region required for RNA-binding stretch occupies residues 245 to 254 (RVCLRKWGYR). 2 interaction with METTL3 regions span residues 255 to 258 (RCED) and 278 to 287 (KAVFQRTKEH). Positions 297–298 (RR) are positively charged region required for RNA-binding. Residues 308-312 (NVDID) are interaction with METTL3. The segment at 392–459 (IERLRPKSPP…GTHRGGFPTR (68 aa)) is disordered. Residues 409–423 (GGGAPRGGGRGGTSA) are compositionally biased toward gly residues. Basic and acidic residues predominate over residues 425–443 (RGERGRERNRTNFRGERGG). Residues 444 to 453 (FRGGRGGTHR) are compositionally biased toward gly residues.

This sequence belongs to the MT-A70-like family. As to quaternary structure, heterodimer; heterodimerizes with METTL3 to form an antiparallel heterodimer that constitutes an active methyltransferase. Component of the WMM complex, a N6-methyltransferase complex composed of a catalytic subcomplex, named MAC, and of an associated subcomplex, named MACOM. The MAC subcomplex is composed of METTL3 and METTL14.

The protein resides in the nucleus. The METTL3-METTL14 heterodimer forms a N6-methyltransferase complex that methylates adenosine residues at the N(6) position of some mRNAs and regulates the circadian clock, differentiation of embryonic stem cells and cortical neurogenesis. In the heterodimer formed with METTL3, METTL14 constitutes the RNA-binding scaffold that recognizes the substrate rather than the catalytic core. N6-methyladenosine (m6A), which takes place at the 5'-[AG]GAC-3' consensus sites of some mRNAs, plays a role in mRNA stability and processing. In Gallus gallus (Chicken), this protein is N(6)-adenosine-methyltransferase non-catalytic subunit METTL14 (METTL14).